A 432-amino-acid polypeptide reads, in one-letter code: Pachytene checkpoint protein 2 homolog (432 aa).

Methionine 1 bears the N-acetylmethionine mark. 179–186 contacts ATP; sequence GPPGTGKT.

It belongs to the AAA ATPase family. PCH2 subfamily. In terms of assembly, specifically interacts with the ligand binding domain of the thyroid receptor (TR). This interaction does not require the presence of thyroid hormone for its interaction. Interacts with proteasome subunit PSMA8; to participate in meiosis progression during spermatogenesis.

Its function is as follows. Plays a key role in chromosome recombination and chromosome structure development during meiosis. Required at early steps in meiotic recombination that leads to non-crossovers pathways. Also needed for efficient completion of homologous synapsis by influencing crossover distribution along the chromosomes affecting both crossovers and non-crossovers pathways. Also required for development of higher-order chromosome structures and is needed for synaptonemal-complex formation. In males, required for efficient synapsis of the sex chromosomes and for sex body formation. Promotes early steps of the DNA double-strand breaks (DSBs) repair process upstream of the assembly of RAD51 complexes. Required for depletion of HORMAD1 and HORMAD2 from synapsed chromosomes. Plays a role in mitotic spindle assembly checkpoint (SAC) activation. This chain is Pachytene checkpoint protein 2 homolog (Trip13), found in Rattus norvegicus (Rat).